The sequence spans 72 residues: Large ribosomal subunit protein eL40 (72 aa).

The protein belongs to the eukaryotic ribosomal protein eL40 family.

In Nicotiana tabacum (Common tobacco), this protein is Large ribosomal subunit protein eL40.